We begin with the raw amino-acid sequence, 360 residues long: Phospho-N-acetylmuramoyl-pentapeptide-transferase (360 aa).

The next 10 helical transmembrane spans lie at 3–23 (SILV…PYLI), 52–72 (MGGV…HLTV), 81–101 (GLLV…DDFI), 115–135 (AKLV…MQFA), 153–173 (ITVI…AISG), 187–207 (LAGG…FWQF), 230–250 (IALV…WNAA), 254–274 (IFMG…LSMV), 282–302 (IIIG…IVVF), and 333–353 (FWVL…ADWL).

The protein belongs to the glycosyltransferase 4 family. MraY subfamily. Mg(2+) serves as cofactor.

The protein localises to the cell membrane. The enzyme catalyses UDP-N-acetyl-alpha-D-muramoyl-L-alanyl-gamma-D-glutamyl-meso-2,6-diaminopimeloyl-D-alanyl-D-alanine + di-trans,octa-cis-undecaprenyl phosphate = di-trans,octa-cis-undecaprenyl diphospho-N-acetyl-alpha-D-muramoyl-L-alanyl-D-glutamyl-meso-2,6-diaminopimeloyl-D-alanyl-D-alanine + UMP. It participates in cell wall biogenesis; peptidoglycan biosynthesis. Catalyzes the initial step of the lipid cycle reactions in the biosynthesis of the cell wall peptidoglycan: transfers peptidoglycan precursor phospho-MurNAc-pentapeptide from UDP-MurNAc-pentapeptide onto the lipid carrier undecaprenyl phosphate, yielding undecaprenyl-pyrophosphoryl-MurNAc-pentapeptide, known as lipid I. The sequence is that of Phospho-N-acetylmuramoyl-pentapeptide-transferase from Saccharopolyspora erythraea (strain ATCC 11635 / DSM 40517 / JCM 4748 / NBRC 13426 / NCIMB 8594 / NRRL 2338).